The primary structure comprises 71 residues: Small ribosomal subunit protein eS31 (71 aa).

Residues C35, C38, C53, and C56 each contribute to the Zn(2+) site. The C4-type zinc finger occupies 35-56 (CPKCGAGVFMAEHLNRYACGKC).

Belongs to the eukaryotic ribosomal protein eS31 family. As to quaternary structure, part of the 30S ribosomal subunit. Zn(2+) is required as a cofactor.

This Methanococcus vannielii (strain ATCC 35089 / DSM 1224 / JCM 13029 / OCM 148 / SB) protein is Small ribosomal subunit protein eS31.